Here is a 220-residue protein sequence, read N- to C-terminus: Adapter protein MecA (220 aa).

The protein belongs to the MecA family. As to quaternary structure, homodimer.

Its function is as follows. Enables the recognition and targeting of unfolded and aggregated proteins to the ClpC protease or to other proteins involved in proteolysis. The chain is Adapter protein MecA from Enterococcus faecalis (strain ATCC 700802 / V583).